Here is a 33-residue protein sequence, read N- to C-terminus: Photosystem II reaction center protein Psb30 (33 aa).

Residues 5–25 form a helical membrane-spanning segment; the sequence is LIGQLVTVALVVGAGPIIIGA.

Belongs to the Psb30/Ycf12 family. In terms of assembly, PSII is composed of 1 copy each of membrane proteins PsbA, PsbB, PsbC, PsbD, PsbE, PsbF, PsbH, PsbI, PsbJ, PsbK, PsbL, PsbM, PsbT, PsbX, PsbY, PsbZ, Psb30/Ycf12, peripheral proteins of the oxygen-evolving complex and a large number of cofactors. It forms dimeric complexes.

The protein resides in the plastid. The protein localises to the chloroplast thylakoid membrane. Functionally, a core subunit of photosystem II (PSII), probably helps stabilize the reaction center. This is Photosystem II reaction center protein Psb30 from Ostreococcus tauri.